A 339-amino-acid chain; its full sequence is AT-hook motif nuclear-localized protein 26 (339 aa).

The span at methionine 1–serine 12 shows a compositional bias: polar residues. Disordered regions lie at residues methionine 1–lysine 132 and methionine 273–tyrosine 339. The span at leucine 24–phenylalanine 45 shows a compositional bias: low complexity. The segment covering asparagine 82–serine 93 has biased composition (polar residues). A compositionally biased stretch (gly residues) spans glycine 102–glycine 113. Residues arginine 118–lysine 130 constitute a DNA-binding region (a.T hook). Residues alanine 142 to glycine 279 enclose the PPC domain. Residues glutamine 278 to glycine 291 show a composition bias toward gly residues. Positions serine 292–glycine 310 are enriched in low complexity.

Its subcellular location is the nucleus. Transcription factor that specifically binds AT-rich DNA sequences related to the nuclear matrix attachment regions (MARs). This Arabidopsis thaliana (Mouse-ear cress) protein is AT-hook motif nuclear-localized protein 26.